The primary structure comprises 250 residues: Probable transcriptional regulatory protein MAP_1030 (250 aa).

This sequence belongs to the TACO1 family.

The protein resides in the cytoplasm. The sequence is that of Probable transcriptional regulatory protein MAP_1030 from Mycolicibacterium paratuberculosis (strain ATCC BAA-968 / K-10) (Mycobacterium paratuberculosis).